The following is a 121-amino-acid chain: Aspartate 1-decarboxylase (121 aa).

The active-site Schiff-base intermediate with substrate; via pyruvic acid is serine 25. Residue serine 25 is modified to Pyruvic acid (Ser). Threonine 57 lines the substrate pocket. Tyrosine 58 (proton donor) is an active-site residue. A substrate-binding site is contributed by 73–75 (GAA).

This sequence belongs to the PanD family. In terms of assembly, heterooctamer of four alpha and four beta subunits. Pyruvate serves as cofactor. In terms of processing, is synthesized initially as an inactive proenzyme, which is activated by self-cleavage at a specific serine bond to produce a beta-subunit with a hydroxyl group at its C-terminus and an alpha-subunit with a pyruvoyl group at its N-terminus.

The protein localises to the cytoplasm. The enzyme catalyses L-aspartate + H(+) = beta-alanine + CO2. It participates in cofactor biosynthesis; (R)-pantothenate biosynthesis; beta-alanine from L-aspartate: step 1/1. Its function is as follows. Catalyzes the pyruvoyl-dependent decarboxylation of aspartate to produce beta-alanine. The protein is Aspartate 1-decarboxylase of Maricaulis maris (strain MCS10) (Caulobacter maris).